The chain runs to 177 residues: Dual-action ribosomal maturation protein DarP (177 aa).

Positions 1 to 26 (MKIVGDSEHFKQPYDSDEEYVSKTED) are disordered.

The protein belongs to the DarP family.

The protein resides in the cytoplasm. Functionally, member of a network of 50S ribosomal subunit biogenesis factors which assembles along the 30S-50S interface, preventing incorrect 23S rRNA structures from forming. Promotes peptidyl transferase center (PTC) maturation. The protein is Dual-action ribosomal maturation protein DarP of Shewanella sp. (strain MR-4).